The primary structure comprises 101 residues: MYAVIRTGGKQYKVSQGDVLRVETVAGDAGGEVIFDDVLMVGGDEGLKVGEATEGAKVTGTIIRQMRDKKVIVFKKKRRKNYIRTQGHRQNLTVVRISGIS.

It belongs to the bacterial ribosomal protein bL21 family. As to quaternary structure, part of the 50S ribosomal subunit. Contacts protein L20.

In terms of biological role, this protein binds to 23S rRNA in the presence of protein L20. The sequence is that of Large ribosomal subunit protein bL21 from Magnetococcus marinus (strain ATCC BAA-1437 / JCM 17883 / MC-1).